A 385-amino-acid polypeptide reads, in one-letter code: Protein-glutamate methylesterase/protein-glutamine glutaminase (385 aa).

Residues 20 to 138 form the Response regulatory domain; it reads RVMIVDDSVV…EASAADIFKH (119 aa). Asp71 bears the 4-aspartylphosphate mark. Residues 189–383 enclose the CheB-type methylesterase domain; that stretch reads GVTAPRVLLI…PKLVRLFSGD (195 aa). Active-site residues include Ser201, His229, and Asp325.

It belongs to the CheB family. Phosphorylated by CheA. Phosphorylation of the N-terminal regulatory domain activates the methylesterase activity.

The protein localises to the cytoplasm. It catalyses the reaction [protein]-L-glutamate 5-O-methyl ester + H2O = L-glutamyl-[protein] + methanol + H(+). It carries out the reaction L-glutaminyl-[protein] + H2O = L-glutamyl-[protein] + NH4(+). In terms of biological role, involved in chemotaxis. Part of a chemotaxis signal transduction system that modulates chemotaxis in response to various stimuli. Catalyzes the demethylation of specific methylglutamate residues introduced into the chemoreceptors (methyl-accepting chemotaxis proteins or MCP) by CheR. Also mediates the irreversible deamidation of specific glutamine residues to glutamic acid. The chain is Protein-glutamate methylesterase/protein-glutamine glutaminase from Rhodopseudomonas palustris (strain BisB5).